A 446-amino-acid polypeptide reads, in one-letter code: MARDEIVDDVDVNMEEDDAEAEQRLINEEYKIWKKNSPFLYDMMLSTALEWPTLTTQWFPDVKNPKDKSHTVHRLLLGTHTAEGKPNYLQIAEVEIPKMVELNPRDYDEERGEIGGYGSKASSGEPLCIRFKITQKIDHPGEVNKARYQPQNPDIIATLAVDGRVLIFDRTKHSITPSGTPSPQLELIGHKEEGFGLNWNPHEEGCLVTGSEDKTVLLWDLKTYEGTSKQLKYSRKYTHHSHIVNDVQHHPLVKSWIGTVSDDLTLQIIDVRRPETDKAAIVARNGHSDAINALAFNPRVETIIATASADKTIGIWDMRNMKSKVHTLEGHQDAVTSLEWHPTESAILGSGSYDRRLLFWDISRVGDEQTQDDAEDGPPELLFMHGGHTNHLADFSWNRNDPWLVCSAAEDNLLQIWKVANSIVSKEPADMSTPELDDPKPKQSSH.

WD repeat units lie at residues 138 to 178 (DHPG…ITPS), 189 to 229 (GHKE…GTSK), 231 to 270 (LKYSRKYTHHSHIVNDVQHHPLVKSWIGTVSDDLTLQIID), 286 to 326 (GHSD…SKVH), and 330 to 370 (GHQD…DEQT). The interaction with the histone H4 N-terminus stretch occupies residues 372-376 (DDAED). Residues 387–427 (GHTNHLADFSWNRNDPWLVCSAAEDNLLQIWKVANSIVSKE) form a WD 6 repeat. Residues 427–446 (EPADMSTPELDDPKPKQSSH) form a disordered region. A compositionally biased stretch (basic and acidic residues) spans 437–446 (DDPKPKQSSH).

The protein belongs to the WD repeat RBAP46/RBAP48/MSI1 family. In terms of assembly, component of the HAT-B complex composed of at least hat-1 and hat-2. The HAT-B complex binds to histone H4 tail.

The protein localises to the cytoplasm. The protein resides in the nucleus. Regulatory subunit of the histone acetylase B (HAT-B) complex. The complex acetylates 'Lys-12' of histone H4 which is required for telomeric silencing. The protein is Histone acetyltransferase type B subunit 2 (hat-2) of Neurospora crassa (strain ATCC 24698 / 74-OR23-1A / CBS 708.71 / DSM 1257 / FGSC 987).